The primary structure comprises 912 residues: Intercellular adhesion molecule 5 (912 aa).

An N-terminal signal peptide occupies residues 1–29 (MPGPSPGLRALLGFWVALGLGILRLSAVA). Residues 30–826 (QEPFWADLQP…RITVRVAGPW (797 aa)) are Extracellular-facing. Ig-like C2-type domains lie at 47–127 (GGSL…PLPP), 132–232 (GENF…RLLA), 239–324 (DSQS…LLTL), 332–395 (GKLV…NGSA), 403–481 (PRLD…VTLT), 486–561 (PALD…VAVT), 566–645 (PSFE…NPLG), 659–734 (PQMD…TVGV), and 738–819 (PVVA…RRIT). N-linked (GlcNAc...) (high mannose) asparagine glycosylation occurs at N53. 2 disulfides stabilise this stretch: C54–C97 and C58–C101. N-linked (GlcNAc...) asparagine glycosylation occurs at N134. C139 and C195 are oxidised to a cystine. 2 positions are modified to phosphothreonine: T179 and T181. N-linked (GlcNAc...) asparagine glycans are attached at residues N192 and N211. A disulfide bond links C246 and C297. N-linked (GlcNAc...) asparagine glycans are attached at residues N311, N366, and N392. C339 and C378 are joined by a disulfide. Cystine bridges form between C410–C465, C493–C546, and C573–C638. N-linked (GlcNAc...) asparagine glycosylation is found at N576 and N639. C666 and C717 are disulfide-bonded. A disordered region spans residues 678 to 708 (AAGPACARGRPSPRVRCSREGAPRPARPRVS). N-linked (GlcNAc...) asparagine glycans are attached at residues N756, N787, and N788. Cysteines 761 and 806 form a disulfide. Residues 827 to 847 (LWIAVGGAVGGAVLLAAGAGL) traverse the membrane as a helical segment. Residues 848 to 912 (AFYVQSTACK…EVFAIQLTSA (65 aa)) lie on the Cytoplasmic side of the membrane. Residues 880–902 (GGAGSGAEGGPEAEDSAESPAGG) are disordered.

Belongs to the immunoglobulin superfamily. ICAM family. In terms of processing, glycosylation at Asn-53 is critical for functional folding. Expressed on neurons in the most rostral segment of the mammalian brain, the telencephalon.

The protein localises to the membrane. In terms of biological role, ICAM proteins are ligands for the leukocyte adhesion protein LFA-1 (integrin alpha-L/beta-2). This is Intercellular adhesion molecule 5 (ICAM5) from Oryctolagus cuniculus (Rabbit).